Reading from the N-terminus, the 537-residue chain is CTP synthase (537 aa).

An amidoligase domain region spans residues 1-265 (MTKYIFVTGG…GKYLTKRLKL (265 aa)). Ser13 contacts CTP. Residue Ser13 coordinates UTP. 14 to 19 (GLGKGI) serves as a coordination point for ATP. Tyr54 serves as a coordination point for L-glutamine. Asp71 is an ATP binding site. 2 residues coordinate Mg(2+): Asp71 and Glu139. CTP contacts are provided by residues 146–148 (DIE), 186–191 (KTKPTQ), and Lys222. UTP contacts are provided by residues 186 to 191 (KTKPTQ) and Lys222. A Glutamine amidotransferase type-1 domain is found at 290–532 (EIAIVGKYVK…VRAAKEYKQE (243 aa)). Gly351 contributes to the L-glutamine binding site. The active-site Nucleophile; for glutamine hydrolysis is the Cys378. Residues 379–382 (FGFQ), Glu402, and Arg459 each bind L-glutamine. Residues His505 and Glu507 contribute to the active site.

Belongs to the CTP synthase family. As to quaternary structure, homotetramer.

The catalysed reaction is UTP + L-glutamine + ATP + H2O = CTP + L-glutamate + ADP + phosphate + 2 H(+). It carries out the reaction L-glutamine + H2O = L-glutamate + NH4(+). It catalyses the reaction UTP + NH4(+) + ATP = CTP + ADP + phosphate + 2 H(+). It participates in pyrimidine metabolism; CTP biosynthesis via de novo pathway; CTP from UDP: step 2/2. Its activity is regulated as follows. Allosterically activated by GTP, when glutamine is the substrate; GTP has no effect on the reaction when ammonia is the substrate. The allosteric effector GTP functions by stabilizing the protein conformation that binds the tetrahedral intermediate(s) formed during glutamine hydrolysis. Inhibited by the product CTP, via allosteric rather than competitive inhibition. In terms of biological role, catalyzes the ATP-dependent amination of UTP to CTP with either L-glutamine or ammonia as the source of nitrogen. Regulates intracellular CTP levels through interactions with the four ribonucleotide triphosphates. The protein is CTP synthase of Pyrococcus furiosus (strain ATCC 43587 / DSM 3638 / JCM 8422 / Vc1).